We begin with the raw amino-acid sequence, 222 residues long: Putative thymidylate synthase (222 aa).

Cys146 is a catalytic residue.

This sequence belongs to the thymidylate synthase family. Archaeal-type ThyA subfamily. Monomer.

The protein resides in the cytoplasm. It functions in the pathway pyrimidine metabolism; dTTP biosynthesis. In terms of biological role, may catalyze the biosynthesis of dTMP using an unknown cosubstrate. This is Putative thymidylate synthase from Methanothermobacter thermautotrophicus (strain ATCC 29096 / DSM 1053 / JCM 10044 / NBRC 100330 / Delta H) (Methanobacterium thermoautotrophicum).